We begin with the raw amino-acid sequence, 416 residues long: Adenylosuccinate synthetase (416 aa).

GTP-binding positions include 13–19 (GDEGKGK) and 41–43 (GHT). Asp14 (proton acceptor) is an active-site residue. Asp14 and Gly41 together coordinate Mg(2+). IMP-binding positions include 14–17 (DEGK), 39–42 (NAGH), Thr126, Arg140, Gln220, Thr235, and Arg299. The active-site Proton donor is His42. Substrate is bound at residue 295-301 (TTTGRKR). Residues Arg301, 327–329 (KLD), and 405–407 (STS) each bind GTP.

It belongs to the adenylosuccinate synthetase family. In terms of assembly, homodimer. It depends on Mg(2+) as a cofactor.

The protein resides in the cytoplasm. It carries out the reaction IMP + L-aspartate + GTP = N(6)-(1,2-dicarboxyethyl)-AMP + GDP + phosphate + 2 H(+). The protein operates within purine metabolism; AMP biosynthesis via de novo pathway; AMP from IMP: step 1/2. Functionally, plays an important role in the de novo pathway of purine nucleotide biosynthesis. Catalyzes the first committed step in the biosynthesis of AMP from IMP. In Campylobacter fetus subsp. fetus (strain 82-40), this protein is Adenylosuccinate synthetase.